The primary structure comprises 784 residues: MNPERSERIEIPVLPLRDVVVYPHMVIPLFVGREKSIRCLEAAMDHDKKIMLVAQKEASTDEPGVNDLFTVGTVASILQMLKLPDGTVKVLVEGLQRARISALSDNGEHFSAKAEYLESPTIDEREQEVLVRTAISQFEGYIKLNKKIPPEVLTSLNSIDDPARLADTIAAHMPLKLADKQSVLEMSDVNERLEYLMAMMESEIDLLQVEKRIRNRVKKQMEKSQREYYLNEQMKAIQKELGEMDDAPDENEALKRKIDAAKMPKEAKEKAEAELQKLKMMSPMSAEATVVRGYIDWMVQVPWNARSKVKKDLRQAQEILDTDHYGLERVKDRILEYLAVQSRVNKIKGPILCLVGPPGVGKTSLGQSIAKATGRKYVRMALGGVRDEAEIRGHRRTYIGSMPGKLIQKMAKVGVKNPLFLLDEIDKMSSDMRGDPASALLEVLDPEQNVAFSDHYLEVDYDLSDVMFVATSNSMNIPAPLLDRMEVIRLSGYTEDEKLNIAKRHLLPKQIERNALKKGELTVDDSAIIGIIRYYTREAGVRGLEREISKLCRKAVKQLLLDKSLKHIEINGDNLHDYLGVQRFDYGRADNENRVGQVTGLAWTEVGGDLLTIETACVPGKGKLTYTGSLGEVMQESIQAALTVVRARAEKLGINPDFYEKRDIHVHVPEGATPKDGPSAGIAMCTALVSCLTGNPVRADVAMTGEITLRGQVLPIGGLKEKLLAAHRGGIKTVLIPFENKRDLEEIPDNVIADLDIHPVKRIEEVLTLALQNEPSGMQVVTAK.

The region spanning 11 to 204 (IPVLPLRDVV…YLMAMMESEI (194 aa)) is the Lon N-terminal domain. 356-363 (GPPGVGKT) is an ATP binding site. The 182-residue stretch at 592–773 (ENRVGQVTGL…EEVLTLALQN (182 aa)) folds into the Lon proteolytic domain. Residues serine 679 and lysine 722 contribute to the active site.

Belongs to the peptidase S16 family. Homohexamer. Organized in a ring with a central cavity. ATP binding and hydrolysis do not affect the oligomeric state of the enzyme.

It is found in the cytoplasm. The catalysed reaction is Hydrolysis of proteins in presence of ATP.. Its activity is regulated as follows. Contains an allosteric site (distinct from its active site), whose occupancy by an unfolded polypeptide leads to enzyme activation. In terms of biological role, ATP-dependent serine protease that mediates the selective degradation of mutant and abnormal proteins as well as certain short-lived regulatory proteins. Required for cellular homeostasis and for survival from DNA damage and developmental changes induced by stress. Degrades polypeptides processively to yield small peptide fragments that are 5 to 10 amino acids long. Binds to DNA in a double-stranded, site-specific manner. Endogenous substrates include the regulatory proteins RcsA and SulA, the transcriptional activator SoxS, and UmuD. Its overproduction specifically inhibits translation through at least two different pathways, one of them being the YoeB-YefM toxin-antitoxin system. The protein is Lon protease of Escherichia coli O6:H1 (strain CFT073 / ATCC 700928 / UPEC).